The sequence spans 175 residues: Flagellar assembly factor FliW (175 aa).

The protein belongs to the FliW family. Interacts with translational regulator CsrA and flagellin(s).

Its subcellular location is the cytoplasm. Its function is as follows. Acts as an anti-CsrA protein, binds CsrA and prevents it from repressing translation of its target genes, one of which is flagellin. Binds to flagellin and participates in the assembly of the flagellum. This Bdellovibrio bacteriovorus (strain ATCC 15356 / DSM 50701 / NCIMB 9529 / HD100) protein is Flagellar assembly factor FliW.